Reading from the N-terminus, the 476-residue chain is MSYDERANAHPNLNDESDVEEEALVNDYREQVNFDDGMSELDRTTSLGAASQTQDLQAQLAAAATPLEYQATLETKFASYDNYCSLFHYILNSDGPVELEVPSYYWAWDVIDEFIYQFESFCRYRNRVARSGSNEEEAQLLRENPNTWGCYSVLNVLYSLIQKSQINEQLAAMKRGEDPAAFAGEYGSRPLYKMLGYFSIIGLLRVHCLLGDFTLALKTLDDIEMNKKAMFARVMAAHFTTYYYVGFSYMMTRRYGDAIRMFSHILVYVSRTKNFQKGGNSYDAIAKKNDQMYALIAICVALHPTRLDDTIHSALREKYGEQLHRLQQGGPEALPLFEELFRSACPKFISPTPPDFDNPALNVDPVDHHTAIFMDEVKNTLYNPTIRSYLKLYTTMDLQKLAGFLDVEPEKLRSWLLVNKQRSRQVRWVEGGLLEGETVSANDLDYALEKDLIHVSETKAGRRLVDWYLRNLARVY.

Positions 257-452 (DAIRMFSHIL…DLDYALEKDL (196 aa)) constitute a PCI domain.

It belongs to the eIF-3 subunit L family. As to quaternary structure, component of the eukaryotic translation initiation factor 3 (eIF-3) complex.

The protein localises to the cytoplasm. In terms of biological role, component of the eukaryotic translation initiation factor 3 (eIF-3) complex, which is involved in protein synthesis of a specialized repertoire of mRNAs and, together with other initiation factors, stimulates binding of mRNA and methionyl-tRNAi to the 40S ribosome. The eIF-3 complex specifically targets and initiates translation of a subset of mRNAs involved in cell proliferation. This is Eukaryotic translation initiation factor 3 subunit L from Emericella nidulans (strain FGSC A4 / ATCC 38163 / CBS 112.46 / NRRL 194 / M139) (Aspergillus nidulans).